The primary structure comprises 434 residues: Nicotinate phosphoribosyltransferase (434 aa).

Phosphohistidine; by autocatalysis is present on histidine 242.

It belongs to the NAPRTase family. In terms of processing, transiently phosphorylated on a His residue during the reaction cycle. Phosphorylation strongly increases the affinity for substrates and increases the rate of nicotinate D-ribonucleotide production. Dephosphorylation regenerates the low-affinity form of the enzyme, leading to product release.

The enzyme catalyses nicotinate + 5-phospho-alpha-D-ribose 1-diphosphate + ATP + H2O = nicotinate beta-D-ribonucleotide + ADP + phosphate + diphosphate. The protein operates within cofactor biosynthesis; NAD(+) biosynthesis; nicotinate D-ribonucleotide from nicotinate: step 1/1. In terms of biological role, catalyzes the synthesis of beta-nicotinate D-ribonucleotide from nicotinate and 5-phospho-D-ribose 1-phosphate at the expense of ATP. In Sinorhizobium fredii (strain NBRC 101917 / NGR234), this protein is Nicotinate phosphoribosyltransferase.